We begin with the raw amino-acid sequence, 335 residues long: GTPase Obg (335 aa).

Positions 1-159 constitute an Obg domain; sequence MQFIDRSEIE…RKLLLELKLL (159 aa). In terms of domain architecture, OBG-type G spans 160-328; sequence AEVGIIGLPN…LLARVWQVLE (169 aa). Residues 166 to 173, 191 to 195, 213 to 216, 280 to 283, and 309 to 311 each bind GTP; these read GLPNAGKS, FTTLV, DIPG, NKAD, and SAA. 2 residues coordinate Mg(2+): S173 and T193.

The protein belongs to the TRAFAC class OBG-HflX-like GTPase superfamily. OBG GTPase family. Monomer. The cofactor is Mg(2+).

It localises to the cytoplasm. Functionally, an essential GTPase which binds GTP, GDP and possibly (p)ppGpp with moderate affinity, with high nucleotide exchange rates and a fairly low GTP hydrolysis rate. Plays a role in control of the cell cycle, stress response, ribosome biogenesis and in those bacteria that undergo differentiation, in morphogenesis control. The sequence is that of GTPase Obg from Gloeobacter violaceus (strain ATCC 29082 / PCC 7421).